The sequence spans 225 residues: Imidazole glycerol phosphate synthase subunit HisH (225 aa).

The region spanning 5-220 (KNVIVDTGCA…LELDSTELNQ (216 aa)) is the Glutamine amidotransferase type-1 domain. Residue C80 is the Nucleophile of the active site. Active-site residues include H195 and E197.

Heterodimer of HisH and HisF.

Its subcellular location is the cytoplasm. It carries out the reaction 5-[(5-phospho-1-deoxy-D-ribulos-1-ylimino)methylamino]-1-(5-phospho-beta-D-ribosyl)imidazole-4-carboxamide + L-glutamine = D-erythro-1-(imidazol-4-yl)glycerol 3-phosphate + 5-amino-1-(5-phospho-beta-D-ribosyl)imidazole-4-carboxamide + L-glutamate + H(+). It catalyses the reaction L-glutamine + H2O = L-glutamate + NH4(+). It functions in the pathway amino-acid biosynthesis; L-histidine biosynthesis; L-histidine from 5-phospho-alpha-D-ribose 1-diphosphate: step 5/9. In terms of biological role, IGPS catalyzes the conversion of PRFAR and glutamine to IGP, AICAR and glutamate. The HisH subunit catalyzes the hydrolysis of glutamine to glutamate and ammonia as part of the synthesis of IGP and AICAR. The resulting ammonia molecule is channeled to the active site of HisF. The sequence is that of Imidazole glycerol phosphate synthase subunit HisH from Colwellia psychrerythraea (strain 34H / ATCC BAA-681) (Vibrio psychroerythus).